The following is a 76-amino-acid chain: Omega/Kappa-hexatoxin-Hv1h (76 aa).

The N-terminal stretch at 1-22 is a signal peptide; it reads MNTATGFIVLLVLATILGGIEA. A propeptide spanning residues 23–35 is cleaved from the precursor; that stretch reads GESHMRKDAMGRV. 3 disulfide bridges follow: cysteine 40/cysteine 55, cysteine 47/cysteine 60, and cysteine 54/cysteine 74.

It belongs to the neurotoxin 08 (Shiva) family. 02 (omega/kappa toxin) subfamily. As to expression, expressed by the venom gland.

It localises to the secreted. Its function is as follows. Toxin that may inhibit ion channels. The polypeptide is Omega/Kappa-hexatoxin-Hv1h (Hadronyche versuta (Blue mountains funnel-web spider)).